A 173-amino-acid polypeptide reads, in one-letter code: Large ribosomal subunit protein uL18 (173 aa).

Belongs to the universal ribosomal protein uL18 family. In terms of assembly, part of the 50S ribosomal subunit. Contacts the 5S and 23S rRNAs.

Its function is as follows. This is one of the proteins that bind and probably mediate the attachment of the 5S RNA into the large ribosomal subunit, where it forms part of the central protuberance. In Methanococcoides burtonii (strain DSM 6242 / NBRC 107633 / OCM 468 / ACE-M), this protein is Large ribosomal subunit protein uL18.